A 444-amino-acid polypeptide reads, in one-letter code: MFTKVLIANRGEIAMRIIRTCSRLGIKTVAVYSEADKDAPHTKAATEAYLIGESRVSESYLNIERIIKTAKKAKADAIHPGYGLLSENSRFAERCKQENIVFIGPSPDIIAKMGSKIEARKAMEAAGVPVVPGVSESLGDIEAACRTASQIGYPVMLKASAGGGGIGMQRVENEEALKKAYEGNKKRAADFFGDGSMYIEKVIEHARHIEVQLLADQHGHTVHLFERDCSVQRRHQKVIEEAPSPFVDDELRMKIGQTAVKAAKAIGYTNAGTIEFIVDQKQNFYFLEMNTRLQVEHPVTEEITGLDLVEQQLRIAAGHTLTFSQKDIQRNGHAIEVRIYAEDPKTFFPSPGTITAFSLPDQKGVRHECAVAKDSTVTPFYDPMIAKMIVKGQTRTEAIEKLETALRDYRVEGIKTNLPLLIQAAATKAFKEGDVTTDFLKQHL.

The 444-residue stretch at 1–444 (MFTKVLIANR…VTTDFLKQHL (444 aa)) folds into the Biotin carboxylation domain. Residues Lys116, Lys158, 164–165 (GG), 200–203 (EKVI), His208, and His235 contribute to the ATP site. Residues 120–317 (RKAMEAAGVP…LVEQQLRIAA (198 aa)) form the ATP-grasp domain. Lys237 serves as a coordination point for hydrogencarbonate. Residues Glu275 and Glu288 each contribute to the ATP site. Positions 275, 288, and 290 each coordinate Mg(2+). Mn(2+) contacts are provided by Glu275, Glu288, and Asn290. Hydrogencarbonate is bound by residues Arg292, Val295, and Arg338. The active site involves Arg292. Biotin is bound at residue Arg338.

As to quaternary structure, acetyl-CoA carboxylase is a heterohexamer of biotin carboxyl carrier protein, biotin carboxylase and the two subunits of carboxyl transferase in a 2:2 complex. Mg(2+) serves as cofactor. It depends on Mn(2+) as a cofactor.

The enzyme catalyses N(6)-biotinyl-L-lysyl-[protein] + hydrogencarbonate + ATP = N(6)-carboxybiotinyl-L-lysyl-[protein] + ADP + phosphate + H(+). It functions in the pathway lipid metabolism; malonyl-CoA biosynthesis; malonyl-CoA from acetyl-CoA: step 1/1. Functionally, this protein is a component of the acetyl coenzyme A carboxylase complex; first, biotin carboxylase catalyzes the carboxylation of the carrier protein and then the transcarboxylase transfers the carboxyl group to form malonyl-CoA. The sequence is that of Biotin carboxylase 2 (accC2) from Bacillus subtilis (strain 168).